The sequence spans 511 residues: Bifunctional purine biosynthesis protein PurH (511 aa).

Positions 1-145 (MKRRAIISVS…KNHAYVTAVV (145 aa)) constitute an MGS-like domain.

This sequence belongs to the PurH family.

The catalysed reaction is (6R)-10-formyltetrahydrofolate + 5-amino-1-(5-phospho-beta-D-ribosyl)imidazole-4-carboxamide = 5-formamido-1-(5-phospho-D-ribosyl)imidazole-4-carboxamide + (6S)-5,6,7,8-tetrahydrofolate. The enzyme catalyses IMP + H2O = 5-formamido-1-(5-phospho-D-ribosyl)imidazole-4-carboxamide. It participates in purine metabolism; IMP biosynthesis via de novo pathway; 5-formamido-1-(5-phospho-D-ribosyl)imidazole-4-carboxamide from 5-amino-1-(5-phospho-D-ribosyl)imidazole-4-carboxamide (10-formyl THF route): step 1/1. It functions in the pathway purine metabolism; IMP biosynthesis via de novo pathway; IMP from 5-formamido-1-(5-phospho-D-ribosyl)imidazole-4-carboxamide: step 1/1. The sequence is that of Bifunctional purine biosynthesis protein PurH from Anoxybacillus flavithermus (strain DSM 21510 / WK1).